The primary structure comprises 275 residues: Light-independent protochlorophyllide reductase iron-sulfur ATP-binding protein (275 aa).

ATP-binding positions include 12 to 17 (GIGKST) and Lys-41. Ser-16 is a Mg(2+) binding site. Positions 97 and 131 each coordinate [4Fe-4S] cluster. An ATP-binding site is contributed by 182–183 (NR).

Belongs to the NifH/BchL/ChlL family. As to quaternary structure, homodimer. Protochlorophyllide reductase is composed of three subunits; BchL, BchN and BchB. [4Fe-4S] cluster serves as cofactor.

The enzyme catalyses chlorophyllide a + oxidized 2[4Fe-4S]-[ferredoxin] + 2 ADP + 2 phosphate = protochlorophyllide a + reduced 2[4Fe-4S]-[ferredoxin] + 2 ATP + 2 H2O. It functions in the pathway porphyrin-containing compound metabolism; bacteriochlorophyll biosynthesis (light-independent). Functionally, component of the dark-operative protochlorophyllide reductase (DPOR) that uses Mg-ATP and reduced ferredoxin to reduce ring D of protochlorophyllide (Pchlide) to form chlorophyllide a (Chlide). This reaction is light-independent. The L component serves as a unique electron donor to the NB-component of the complex, and binds Mg-ATP. The protein is Light-independent protochlorophyllide reductase iron-sulfur ATP-binding protein of Pelodictyon phaeoclathratiforme (strain DSM 5477 / BU-1).